A 245-amino-acid chain; its full sequence is Orotidine 5'-phosphate decarboxylase (245 aa).

Substrate contacts are provided by residues aspartate 22, lysine 44, 71-80 (DLKFHDIPNT), threonine 131, arginine 192, glutamine 201, glycine 221, and arginine 222. Catalysis depends on lysine 73, which acts as the Proton donor.

It belongs to the OMP decarboxylase family. Type 1 subfamily. In terms of assembly, homodimer.

It catalyses the reaction orotidine 5'-phosphate + H(+) = UMP + CO2. It participates in pyrimidine metabolism; UMP biosynthesis via de novo pathway; UMP from orotate: step 2/2. Functionally, catalyzes the decarboxylation of orotidine 5'-monophosphate (OMP) to uridine 5'-monophosphate (UMP). This Salmonella gallinarum (strain 287/91 / NCTC 13346) protein is Orotidine 5'-phosphate decarboxylase.